The following is a 129-amino-acid chain: Small ribosomal subunit protein uS11c (129 aa).

The protein belongs to the universal ribosomal protein uS11 family. As to quaternary structure, part of the 30S ribosomal subunit.

The protein resides in the plastid. Its subcellular location is the chloroplast. This is Small ribosomal subunit protein uS11c from Gracilaria tenuistipitata var. liui (Red alga).